Here is an 87-residue protein sequence, read N- to C-terminus: Omega-lycotoxin-Am1g (87 aa).

An N-terminal signal peptide occupies residues 1 to 17 (MKLSIFFVLFFIAIAYC). Residues 18-40 (QPEFLDDEEDEVEETLPVAEEGR) constitute a propeptide that is removed on maturation. 4 disulfides stabilise this stretch: Cys-44–Cys-59, Cys-51–Cys-64, Cys-58–Cys-84, and Cys-66–Cys-82.

This sequence belongs to the neurotoxin omega-lctx family. Expressed by the venom gland.

The protein localises to the secreted. Modulates Cav2.1/CACNA1A voltage-gated calcium channels (P/Q-type currents) in rat cerebellar Purkinje cells and hippocampal CA1-CA3 neurons. At saturating concentrations (&gt;10 nM) decelerates activation kinetics and slightly increases peak amplitude without affecting deactivation kinetics. In vivo, does not cause death when intravenously injected into mice. In rat models, through its activity on Cav2.1/CACNA1A, has an ameliorative effect on memory defects provoked by hyperstimulation of N-methyl-D-aspartate receptors (NMDARs) in the hippocampus. This Alopecosa marikovskyi (Wolf spider) protein is Omega-lycotoxin-Am1g.